A 451-amino-acid chain; its full sequence is uncharacterized protein (451 aa).

The FAD-binding PCMH-type domain maps to 29–204; sequence LERYPDIIVF…TSMTFKAVPI (176 aa). Histidine 66 carries the post-translational modification Pros-8alpha-FAD histidine.

Belongs to the oxygen-dependent FAD-linked oxidoreductase family. FAD serves as cofactor.

This is an uncharacterized protein from Bacillus subtilis (strain 168).